The sequence spans 185 residues: Ribosome-recycling factor (185 aa).

The protein belongs to the RRF family.

The protein localises to the cytoplasm. Functionally, responsible for the release of ribosomes from messenger RNA at the termination of protein biosynthesis. May increase the efficiency of translation by recycling ribosomes from one round of translation to another. This chain is Ribosome-recycling factor, found in Marinomonas sp. (strain MWYL1).